The primary structure comprises 710 residues: Polyribonucleotide nucleotidyltransferase (710 aa).

Residues Asp-491 and Asp-497 each contribute to the Mg(2+) site. One can recognise a KH domain in the interval 558–618; the sequence is PRIYKIQVKP…SAAQKAIEII (61 aa). In terms of domain architecture, S1 motif spans 628-696; that stretch reads GRIYMGKVTR…ELGRVRLSRK (69 aa).

The protein belongs to the polyribonucleotide nucleotidyltransferase family. Requires Mg(2+) as cofactor.

Its subcellular location is the cytoplasm. The catalysed reaction is RNA(n+1) + phosphate = RNA(n) + a ribonucleoside 5'-diphosphate. Its function is as follows. Involved in mRNA degradation. Catalyzes the phosphorolysis of single-stranded polyribonucleotides processively in the 3'- to 5'-direction. The protein is Polyribonucleotide nucleotidyltransferase of Thermodesulfovibrio yellowstonii (strain ATCC 51303 / DSM 11347 / YP87).